Reading from the N-terminus, the 211-residue chain is Ribosomal RNA small subunit methyltransferase G (211 aa).

Residues glycine 73, 126–127 (IE), and arginine 142 each bind S-adenosyl-L-methionine.

This sequence belongs to the methyltransferase superfamily. RNA methyltransferase RsmG family.

The protein localises to the cytoplasm. It carries out the reaction guanosine(527) in 16S rRNA + S-adenosyl-L-methionine = N(7)-methylguanosine(527) in 16S rRNA + S-adenosyl-L-homocysteine. In terms of biological role, specifically methylates the N7 position of guanine in position 527 of 16S rRNA. The polypeptide is Ribosomal RNA small subunit methyltransferase G (Methylorubrum populi (strain ATCC BAA-705 / NCIMB 13946 / BJ001) (Methylobacterium populi)).